The chain runs to 461 residues: Cysteine--tRNA ligase (461 aa).

Zn(2+) is bound at residue Cys30. Residues 32–42 carry the 'HIGH' region motif; that stretch reads VTIYDLCHIGH. Zn(2+)-binding residues include Cys211, His236, and Glu240. The 'KMSKS' region motif lies at 268-272; it reads KMSKS. Lys271 is an ATP binding site.

Belongs to the class-I aminoacyl-tRNA synthetase family. In terms of assembly, monomer. Requires Zn(2+) as cofactor.

Its subcellular location is the cytoplasm. The enzyme catalyses tRNA(Cys) + L-cysteine + ATP = L-cysteinyl-tRNA(Cys) + AMP + diphosphate. This chain is Cysteine--tRNA ligase, found in Shewanella putrefaciens (strain CN-32 / ATCC BAA-453).